The primary structure comprises 318 residues: MSNEYFDPKLKIFSLNSNRELAEEIAKEVGIELGKSSVTHFSDGEIQINIEESIRGCHVYVIQSTSNPVNQNLMELLIMIDALKRASAATINIVMPYYGYARQDRKARSREPITAKLVANLIETAGATRMITLDMHAPQIQGFFDIPIDHLNAVRLLSDYFSERHLGDDLVVVSPDHGGVTRARKMADRLKAPIAIIDKRRPRPNVAEVMNIVGNVEGKVCIIIDDIIDTAGTITLAAKALREAGATKVYACCSHPVLSGPAMKRIEESPIEKLVVTNSIALPEEKWIDKMEQLSVAALLGEAIVRVHENASVSSLFE.

Residues 43-45 (DGE) and 102-103 (RQ) each bind ATP. His136 and Asp176 together coordinate Mg(2+). Residue Lys199 is part of the active site. Residues Arg201, Asp225, and 229-233 (DTAGT) each bind D-ribose 5-phosphate.

The protein belongs to the ribose-phosphate pyrophosphokinase family. Class I subfamily. In terms of assembly, homohexamer. It depends on Mg(2+) as a cofactor.

It localises to the cytoplasm. The enzyme catalyses D-ribose 5-phosphate + ATP = 5-phospho-alpha-D-ribose 1-diphosphate + AMP + H(+). It participates in metabolic intermediate biosynthesis; 5-phospho-alpha-D-ribose 1-diphosphate biosynthesis; 5-phospho-alpha-D-ribose 1-diphosphate from D-ribose 5-phosphate (route I): step 1/1. Its function is as follows. Involved in the biosynthesis of the central metabolite phospho-alpha-D-ribosyl-1-pyrophosphate (PRPP) via the transfer of pyrophosphoryl group from ATP to 1-hydroxyl of ribose-5-phosphate (Rib-5-P). The polypeptide is Ribose-phosphate pyrophosphokinase 1 (Listeria monocytogenes serotype 4b (strain F2365)).